Here is a 131-residue protein sequence, read N- to C-terminus: DNA-directed RNA polymerases I, II, and III subunit RPABC2 (131 aa).

Residues methionine 1 to aspartate 24 form a disordered region.

This sequence belongs to the archaeal Rpo6/eukaryotic RPB6 RNA polymerase subunit family. As to quaternary structure, component of the RNA polymerase I (Pol I), RNA polymerase II (Pol II) and RNA polymerase III (Pol III) complexes consisting of at least 13, 12 and 17 subunits, respectively.

It is found in the nucleus. In terms of biological role, DNA-dependent RNA polymerases catalyze the transcription of DNA into RNA using the four ribonucleoside triphosphates as substrates. Common component of RNA polymerases I, II and III which synthesize ribosomal RNA precursors, mRNA precursors and many functional non-coding RNAs, and small RNAs, such as 5S rRNA and tRNAs, respectively. Pol II is the central component of the basal RNA polymerase II transcription machinery. Pols are composed of mobile elements that move relative to each other. In Pol II, Polr2F/RPB6 is part of the clamp element and together with parts of Polr2A/RPB1 and RPB2 forms a pocket to which the Polr2D/RPB4-Polr2G/RPB7 subcomplex binds. This Drosophila melanogaster (Fruit fly) protein is DNA-directed RNA polymerases I, II, and III subunit RPABC2.